The primary structure comprises 366 residues: MISSFHRPTVARVNLQAIKENVASVQKHIPLGVKTYAVVKADAYGHGAVQVSKALLPQVDGYCVSNLDEALQLRQAGIDKEILILGVLLPNELELAVANAITVTIASLDWIALARLEKKECQGLKVHVKVDSGMGRIGLRSSKEVNLLIDSLKELGADVEGIFTHFATADEADDTKFNQQLQFFKKLIAGLEDKPRLVHASNSATSIWHSDTIFNAVRLGIVSYGLNPSGSNLSLPFPLQEALSLESSLVHVKMISAGDTVGYGATYTAKKSEYVGTVPIGYADGWTRNMQGFSVLVDGQFCEIIGRVSMDQLTIRLSKAYPLGTKVTLIGSNQQKNISTTDIANYRNTINYEVLCLLSDRIPRIY.

The active-site Proton acceptor; specific for D-alanine is K40. Residue K40 is modified to N6-(pyridoxal phosphate)lysine. R136 lines the substrate pocket. Residue Y263 is the Proton acceptor; specific for L-alanine of the active site. M310 provides a ligand contact to substrate.

This sequence belongs to the alanine racemase family. Pyridoxal 5'-phosphate is required as a cofactor.

It carries out the reaction L-alanine = D-alanine. The protein operates within amino-acid biosynthesis; D-alanine biosynthesis; D-alanine from L-alanine: step 1/1. In terms of biological role, catalyzes the interconversion of L-alanine and D-alanine. May also act on other amino acids. In Streptococcus pyogenes serotype M2 (strain MGAS10270), this protein is Alanine racemase (alr).